Consider the following 316-residue polypeptide: Transaldolase (316 aa).

Residue K131 is the Schiff-base intermediate with substrate of the active site.

It belongs to the transaldolase family. Type 1 subfamily. Homodimer.

Its subcellular location is the cytoplasm. The catalysed reaction is D-sedoheptulose 7-phosphate + D-glyceraldehyde 3-phosphate = D-erythrose 4-phosphate + beta-D-fructose 6-phosphate. It functions in the pathway carbohydrate degradation; pentose phosphate pathway; D-glyceraldehyde 3-phosphate and beta-D-fructose 6-phosphate from D-ribose 5-phosphate and D-xylulose 5-phosphate (non-oxidative stage): step 2/3. Its function is as follows. Transaldolase is important for the balance of metabolites in the pentose-phosphate pathway. The chain is Transaldolase from Buchnera aphidicola subsp. Baizongia pistaciae (strain Bp).